The sequence spans 328 residues: Serine protease 27 (328 aa).

An N-terminal signal peptide occupies residues 1–22 (MRQPHIAALLLLPLLLRSGTEG). Residues 23 to 37 (ARTLRACGHPKMFNR) constitute a propeptide, activation peptide. In terms of domain architecture, Peptidase S1 spans 38–280 (MVGGENALEG…HHKWIHQIIP (243 aa)). C63 and C79 are oxidised to a cystine. Residue H78 is the Charge relay system of the active site. A glycan (N-linked (GlcNAc...) asparagine) is linked at N82. D127 acts as the Charge relay system in catalysis. Cystine bridges form between C161–C238, C194–C217, and C228–C256. S232 functions as the Charge relay system in the catalytic mechanism.

This sequence belongs to the peptidase S1 family.

The protein localises to the secreted. The protein is Serine protease 27 (Prss27) of Mus musculus (Mouse).